The following is a 75-amino-acid chain: Large ribosomal subunit protein uL29 (75 aa).

The protein belongs to the universal ribosomal protein uL29 family.

The protein is Large ribosomal subunit protein uL29 of Pyrobaculum aerophilum (strain ATCC 51768 / DSM 7523 / JCM 9630 / CIP 104966 / NBRC 100827 / IM2).